Consider the following 196-residue polypeptide: uncharacterized protein (196 aa).

The Bro-N domain occupies 58–163 (HKFFDAIKDS…IILPNNYHKN (106 aa)).

This is an uncharacterized protein from Acanthamoeba polyphaga mimivirus (APMV).